The primary structure comprises 1378 residues: Carboxypeptidase D (1378 aa).

The N-terminal stretch at 1–37 (MASGWDERPPWRLESLRLLPPPPLLLLLLLLRSSAQA) is a signal peptide. Topologically, residues 38-1297 (AHIKKAEATT…DNRIFGLPRE (1260 aa)) are extracellular. Positions 62–380 (HYYHEAALGE…ESLITLIEKV (319 aa)) constitute a Peptidase M14 1 domain. The Zn(2+) site is built by His139 and Glu142. The Cell attachment site motif lies at 162-164 (RGD). N-linked (GlcNAc...) asparagine glycans are attached at residues Asn172 and Asn217. Positions 189 to 232 (RAREGDCGLGDSGPPGTSGRDNSRGRDLNRSFPDQFSTGEPPSL) are disordered. Residue His257 coordinates Zn(2+). Position 265 is a phosphotyrosine (Tyr265). At Ser270 the chain carries Phosphoserine. Glu350 (proton donor/acceptor) is an active-site residue. 4 N-linked (GlcNAc...) asparagine glycosylation sites follow: Asn399, Asn410, Asn429, and Asn522. In terms of domain architecture, Peptidase M14 2 spans 502-792 (HHHHFPDMEI…RSLIQFMKQV (291 aa)). Residues His564 and Glu567 each coordinate Zn(2+). Asn626 is a glycosylation site (N-linked (GlcNAc...) asparagine). Residue His671 participates in Zn(2+) binding. Glu762 serves as the catalytic Proton donor/acceptor. 6 N-linked (GlcNAc...) asparagine glycosylation sites follow: Asn811, Asn855, Asn867, Asn879, Asn953, and Asn976. The interval 875 to 898 (TDANNESKKGKGHSTSTDDTSDPT) is disordered. A Peptidase M14 3 domain is found at 930-1209 (RYHSYKDLSE…KSLLSMLVEV (280 aa)). Over residues 1039-1048 (RERAQEKDCT) the composition is skewed to basic and acidic residues. A disordered region spans residues 1039–1068 (RERAQEKDCTSKTGHTNARGRDLDTDFTSN). N-linked (GlcNAc...) asparagine glycans are attached at residues Asn1068 and Asn1140. A helical membrane pass occupies residues 1298-1318 (LVVTVSGATMSALILTACIIW). S-palmitoyl cysteine attachment occurs at residues Cys1315, Cys1319, and Cys1321. Over 1319-1378 (CICSIKSNRHKDGFHRLRQHHDEYEDEIRMMSTGSKKSLLSHEFQDETDTEEETLYSSKH) the chain is Cytoplasmic. A phosphoserine mark is found at Ser1356 and Ser1359. The interval 1357 to 1378 (LLSHEFQDETDTEEETLYSSKH) is disordered. Thr1366 and Thr1368 each carry phosphothreonine.

This sequence belongs to the peptidase M14 family. It depends on Zn(2+) as a cofactor. As to expression, isoform 1 is widely expressed with highest levels in the hippocampus, spinal cord, atrium, colon, testis and ovaries. Detected in the liver of females but not males. Isoform 2 is not detected in brain or lung.

The protein localises to the cell membrane. It localises to the nucleus. The enzyme catalyses Releases C-terminal Arg and Lys from polypeptides.. The polypeptide is Carboxypeptidase D (Rattus norvegicus (Rat)).